A 178-amino-acid chain; its full sequence is Hypoxanthine-guanine phosphoribosyltransferase (178 aa).

The diphosphate site is built by Lys46 and Gly47. Mg(2+) is bound at residue Asp103. Residue Asp106 is the Proton acceptor of the active site. Residues Lys134, 155–156, and Asp162 contribute to the GMP site; that span reads FL. Diphosphate is bound at residue Arg168.

This sequence belongs to the purine/pyrimidine phosphoribosyltransferase family. Mg(2+) serves as cofactor.

It localises to the cytoplasm. The enzyme catalyses IMP + diphosphate = hypoxanthine + 5-phospho-alpha-D-ribose 1-diphosphate. The catalysed reaction is GMP + diphosphate = guanine + 5-phospho-alpha-D-ribose 1-diphosphate. It participates in purine metabolism; IMP biosynthesis via salvage pathway; IMP from hypoxanthine: step 1/1. The protein operates within purine metabolism; GMP biosynthesis via salvage pathway; GMP from guanine: step 1/1. In terms of biological role, purine salvage pathway enzyme that catalyzes the transfer of the ribosyl-5-phosphate group from 5-phospho-alpha-D-ribose 1-diphosphate (PRPP) to the N9 position of the 6-oxopurines hypoxanthine and guanine to form the corresponding ribonucleotides IMP (inosine 5'-monophosphate) and GMP (guanosine 5'-monophosphate), with the release of PPi. The chain is Hypoxanthine-guanine phosphoribosyltransferase (hpt) from Aquifex aeolicus (strain VF5).